We begin with the raw amino-acid sequence, 475 residues long: Cysteine--tRNA ligase (475 aa).

Residue Cys-28 participates in Zn(2+) binding. Positions 30–40 match the 'HIGH' region motif; the sequence is PTVYDYAHIGN. Zn(2+) is bound by residues Cys-213, His-238, and Glu-242. A 'KMSKS' region motif is present at residues 270-274; the sequence is KMSKS. An ATP-binding site is contributed by Lys-273.

This sequence belongs to the class-I aminoacyl-tRNA synthetase family. Monomer. Zn(2+) serves as cofactor.

The protein resides in the cytoplasm. The catalysed reaction is tRNA(Cys) + L-cysteine + ATP = L-cysteinyl-tRNA(Cys) + AMP + diphosphate. The chain is Cysteine--tRNA ligase (cysS) from Chlamydia muridarum (strain MoPn / Nigg).